Here is a 314-residue protein sequence, read N- to C-terminus: tRNA dimethylallyltransferase (314 aa).

16–23 (GPTGVGKT) is a binding site for ATP. Residue 18-23 (TGVGKT) coordinates substrate. The interval 41–44 (DSMQ) is interaction with substrate tRNA.

Belongs to the IPP transferase family. In terms of assembly, monomer. Mg(2+) is required as a cofactor.

It catalyses the reaction adenosine(37) in tRNA + dimethylallyl diphosphate = N(6)-dimethylallyladenosine(37) in tRNA + diphosphate. Its function is as follows. Catalyzes the transfer of a dimethylallyl group onto the adenine at position 37 in tRNAs that read codons beginning with uridine, leading to the formation of N6-(dimethylallyl)adenosine (i(6)A). The polypeptide is tRNA dimethylallyltransferase (Desulfosudis oleivorans (strain DSM 6200 / JCM 39069 / Hxd3) (Desulfococcus oleovorans)).